Consider the following 274-residue polypeptide: Probable endonuclease LCL3 (274 aa).

Residues 15-32 (AVLSIILTGSTLTLIYTY) traverse the membrane as a helical segment. Positions 53 to 261 (HWLYGKVTSV…RSRKKGLWIQ (209 aa)) constitute a TNase-like domain. The active site involves Arg-151. Asp-156 is a binding site for Ca(2+). Active-site residues include Glu-159 and Arg-199.

The protein belongs to the LCL3 family.

The protein localises to the mitochondrion. It is found in the membrane. The protein is Probable endonuclease LCL3 (LCL3) of Saccharomyces cerevisiae (strain RM11-1a) (Baker's yeast).